We begin with the raw amino-acid sequence, 188 residues long: Pyridoxal 5'-phosphate synthase subunit PdxT (188 aa).

46–48 (GES) provides a ligand contact to L-glutamine. Cys78 serves as the catalytic Nucleophile. L-glutamine-binding positions include Arg106 and 132-133 (IR). Residues His169 and Glu171 each act as charge relay system in the active site.

The protein belongs to the glutaminase PdxT/SNO family. In terms of assembly, in the presence of PdxS, forms a dodecamer of heterodimers. Only shows activity in the heterodimer.

The enzyme catalyses aldehydo-D-ribose 5-phosphate + D-glyceraldehyde 3-phosphate + L-glutamine = pyridoxal 5'-phosphate + L-glutamate + phosphate + 3 H2O + H(+). It carries out the reaction L-glutamine + H2O = L-glutamate + NH4(+). It participates in cofactor biosynthesis; pyridoxal 5'-phosphate biosynthesis. In terms of biological role, catalyzes the hydrolysis of glutamine to glutamate and ammonia as part of the biosynthesis of pyridoxal 5'-phosphate. The resulting ammonia molecule is channeled to the active site of PdxS. In Tropheryma whipplei (strain Twist) (Whipple's bacillus), this protein is Pyridoxal 5'-phosphate synthase subunit PdxT.